We begin with the raw amino-acid sequence, 276 residues long: Large ribosomal subunit protein uL2 (276 aa).

The segment at 221 to 276 is disordered; sequence RGSAMNPNDHPHGGGEGRAPIGRKSPMTPWGKKARGIKTRDRKKSSNELIIRRRTK. Over residues 252–263 the composition is skewed to basic residues; sequence KKARGIKTRDRK.

It belongs to the universal ribosomal protein uL2 family. In terms of assembly, part of the 50S ribosomal subunit. Forms a bridge to the 30S subunit in the 70S ribosome.

In terms of biological role, one of the primary rRNA binding proteins. Required for association of the 30S and 50S subunits to form the 70S ribosome, for tRNA binding and peptide bond formation. It has been suggested to have peptidyltransferase activity; this is somewhat controversial. Makes several contacts with the 16S rRNA in the 70S ribosome. The polypeptide is Large ribosomal subunit protein uL2 (Phytoplasma australiense).